The primary structure comprises 419 residues: 4-hydroxyphenylpyruvate dioxygenase (419 aa).

2 VOC domains span residues 41-187 (GYHH…FIQR) and 218-376 (AIDH…LFTK). 3 residues coordinate Fe cation: His221, His304, and Glu387.

This sequence belongs to the 4HPPD family. Fe cation is required as a cofactor.

The catalysed reaction is 3-(4-hydroxyphenyl)pyruvate + O2 = homogentisate + CO2. The protein operates within amino-acid degradation; L-phenylalanine degradation; acetoacetate and fumarate from L-phenylalanine: step 3/6. This Zymoseptoria tritici (Speckled leaf blotch fungus) protein is 4-hydroxyphenylpyruvate dioxygenase (HPPD).